We begin with the raw amino-acid sequence, 92 residues long: Acylphosphatase (92 aa).

In terms of domain architecture, Acylphosphatase-like spans 4-92 (AVQLDVFGRV…SACHKFSVVG (89 aa)). Catalysis depends on residues R19 and N37.

This sequence belongs to the acylphosphatase family.

It catalyses the reaction an acyl phosphate + H2O = a carboxylate + phosphate + H(+). In Latilactobacillus sakei subsp. sakei (strain 23K) (Lactobacillus sakei subsp. sakei), this protein is Acylphosphatase (acyP).